The primary structure comprises 291 residues: MSTVAKTNPKSSNKPGPVKSIIAGGVAGAIEISITYPAEFAKTRLQLYRNVEGTKAKLPPFGLEWYRGCSTVIVGNSLKAAVRFFAFDSIKKSLSDEHGHLTGPRTVLAGLGAGVAESVLVLTPFESIKTAIIDDRKRPNPRLKGFLQASRIIVHENGIRGLYRGLAATVARQAANSGVRFTAYNSIKQSLQSRLPPDEKLSTVTTFLVGSVAGIITVYCTQPIDTVKSRMQSLSASKEYKNSIHCAYKILTQDGLLRFWSGATPRLARLILSGGIVFTVYEKVMEILKPF.

Solcar repeat units follow at residues 15–93 (PGPV…IKKS), 104–190 (PRTV…IKQS), and 201–287 (LSTV…VMEI). 6 helical membrane-spanning segments follow: residues 21-41 (IIAG…AEFA), 70-90 (STVI…FDSI), 108-128 (LAGL…FESI), 169-189 (TVAR…SIKQ), 201-221 (LSTV…VYCT), and 259-280 (FWSG…VFTV).

Belongs to the mitochondrial carrier (TC 2.A.29) family.

It is found in the mitochondrion inner membrane. This is an uncharacterized protein from Schizosaccharomyces pombe (strain 972 / ATCC 24843) (Fission yeast).